Here is a 1225-residue protein sequence, read N- to C-terminus: Mediator of RNA polymerase II transcription subunit 13 (1225 aa).

It belongs to the Mediator complex subunit 13 family. As to quaternary structure, component of the srb8-11 complex which consists of rb8, srb9(TRAP240), srb10 and srb11. The srb8-11 complex associates with the Mediator complex thereby blocking association with RNA polymerase II and leading to reduced transcriptional activation by Mediator.

It localises to the nucleus. Component of the srb8-11 complex. The srb8-11 complex is a regulatory module of the Mediator complex which is itself involved in regulation of basal and activated RNA polymerase II-dependent transcription. The srb8-11 complex may be involved in the transcriptional repression of a subset of genes regulated by Mediator. It may inhibit the association of the Mediator complex with RNA polymerase II to form the holoenzyme complex. This chain is Mediator of RNA polymerase II transcription subunit 13 (srb9), found in Schizosaccharomyces pombe (strain 972 / ATCC 24843) (Fission yeast).